The primary structure comprises 466 residues: UDP-N-acetylmuramoylalanine--D-glutamate ligase (466 aa).

Residue 121-127 (GTNGKST) coordinates ATP.

This sequence belongs to the MurCDEF family.

The protein localises to the cytoplasm. It catalyses the reaction UDP-N-acetyl-alpha-D-muramoyl-L-alanine + D-glutamate + ATP = UDP-N-acetyl-alpha-D-muramoyl-L-alanyl-D-glutamate + ADP + phosphate + H(+). The protein operates within cell wall biogenesis; peptidoglycan biosynthesis. In terms of biological role, cell wall formation. Catalyzes the addition of glutamate to the nucleotide precursor UDP-N-acetylmuramoyl-L-alanine (UMA). This Bradyrhizobium diazoefficiens (strain JCM 10833 / BCRC 13528 / IAM 13628 / NBRC 14792 / USDA 110) protein is UDP-N-acetylmuramoylalanine--D-glutamate ligase.